Reading from the N-terminus, the 89-residue chain is Small ribosomal subunit protein uS15 (89 aa).

Belongs to the universal ribosomal protein uS15 family. Part of the 30S ribosomal subunit. Forms a bridge to the 50S subunit in the 70S ribosome, contacting the 23S rRNA.

Functionally, one of the primary rRNA binding proteins, it binds directly to 16S rRNA where it helps nucleate assembly of the platform of the 30S subunit by binding and bridging several RNA helices of the 16S rRNA. In terms of biological role, forms an intersubunit bridge (bridge B4) with the 23S rRNA of the 50S subunit in the ribosome. In Chloroflexus aurantiacus (strain ATCC 29366 / DSM 635 / J-10-fl), this protein is Small ribosomal subunit protein uS15.